The primary structure comprises 274 residues: NH(3)-dependent NAD(+) synthetase (274 aa).

46–53 (GISGGQDS) contributes to the ATP binding site. Asp52 lines the Mg(2+) pocket. Arg140 contacts deamido-NAD(+). Thr160 provides a ligand contact to ATP. Glu165 is a Mg(2+) binding site. Residues Lys173 and Asp180 each coordinate deamido-NAD(+). Positions 189 and 211 each coordinate ATP. 260 to 261 (HK) contributes to the deamido-NAD(+) binding site.

It belongs to the NAD synthetase family. Homodimer.

It catalyses the reaction deamido-NAD(+) + NH4(+) + ATP = AMP + diphosphate + NAD(+) + H(+). It functions in the pathway cofactor biosynthesis; NAD(+) biosynthesis; NAD(+) from deamido-NAD(+) (ammonia route): step 1/1. In terms of biological role, catalyzes the ATP-dependent amidation of deamido-NAD to form NAD. Uses ammonia as a nitrogen source. This is NH(3)-dependent NAD(+) synthetase from Streptococcus gordonii (strain Challis / ATCC 35105 / BCRC 15272 / CH1 / DL1 / V288).